The sequence spans 154 residues: MIKVICVGTIKERYFKEAAEEYKKRLSRWTKIEEIEIKEEDENKYRNVEMLLKKEAEKILKHIKEGQYVVVFDINGTQLSSEEFAELLDRKVSKGEEIVFVIGGSNGLADAIKKRANLLISFSKLTFPHQLFRILVYEQIYRGFTIIKGIKYHK.

Residues G103 and 122-127 each bind S-adenosyl-L-methionine; that span reads FSKLTF.

This sequence belongs to the RNA methyltransferase RlmH family. In terms of assembly, homodimer.

The protein localises to the cytoplasm. The catalysed reaction is pseudouridine(1915) in 23S rRNA + S-adenosyl-L-methionine = N(3)-methylpseudouridine(1915) in 23S rRNA + S-adenosyl-L-homocysteine + H(+). Functionally, specifically methylates the pseudouridine at position 1915 (m3Psi1915) in 23S rRNA. In Caldicellulosiruptor saccharolyticus (strain ATCC 43494 / DSM 8903 / Tp8T 6331), this protein is Ribosomal RNA large subunit methyltransferase H.